The primary structure comprises 3912 residues: Ubiquitin carboxyl-terminal hydrolase puf (3912 aa).

5 disordered regions span residues 101-172, 518-590, 660-688, 851-878, and 1491-1611; these read AQQQ…HKSH, NVTA…ISPE, DVPS…ECSD, VVSG…VQPS, and SRRG…PALS. Residues 106-133 are compositionally biased toward basic and acidic residues; it reads EQQRDEASAQAEAKESSAPAEEPKKEEP. Low complexity predominate over residues 134–143; it reads SGSAGEEAQG. Pro residues predominate over residues 150 to 164; it reads KKPPVGPCTPPPPQT. Residues 522–532 show a composition bias toward low complexity; sequence SSSDSGSIEGS. Basic and acidic residues predominate over residues 576–585; it reads ICDPTTEKGK. Over residues 660–687 the composition is skewed to acidic residues; sequence DVPSSDEADGEADGDGEGELLADSDECS. A compositionally biased stretch (polar residues) spans 862–876; the sequence is KASQGSSTSGSTPVQ. A compositionally biased stretch (basic residues) spans 1511–1520; the sequence is VKKSSMGRRR. A compositionally biased stretch (polar residues) spans 1550–1567; the sequence is TPSTGLQDVETEASSSSG. Residues 1583 to 1594 show a composition bias toward basic and acidic residues; it reads KGETFEQEKERP. Pro residues predominate over residues 1600 to 1609; that stretch reads PPSPTPPPPA. The USP domain maps to 2015 to 2380; it reads VGLTNLGATC…SAYMLFYERR (366 aa). The Nucleophile role is filled by Cys-2024. Basic and acidic residues predominate over residues 2249–2263; sequence YKEERERRQKEKEGA. Residues 2249 to 2274 are disordered; the sequence is YKEERERRQKEKEGADGSGDGNDNEK. The active-site Proton acceptor is His-2305. Disordered stretches follow at residues 2391–2529, 3322–3344, 3657–3776, and 3800–3912; these read ELLV…TSKA, QQSQ…LQQQ, SERF…EERE, and ASVP…PTQI. Basic and acidic residues-rich tracts occupy residues 2402–2413 and 2433–2488; these read VEEKSEAEEPTK and EKDK…EKPT. Low complexity predominate over residues 2504-2523; the sequence is NCDNHQQNNNSNSKASNDQQ. Basic and acidic residues predominate over residues 3657–3703; sequence SERFRKESERDPFPNKKQKRDSQKIKEKEHPQPESEKETSTENDKPS. Residues 3706-3721 are compositionally biased toward polar residues; it reads SMESSGNAEQATDSTK. The segment covering 3741–3751 has biased composition (acidic residues); that stretch reads SDDETELEDEL. Over residues 3766 to 3776 the composition is skewed to basic and acidic residues; it reads TAQDRVNEERE. Over residues 3865 to 3877 the composition is skewed to polar residues; it reads PKTSQTNGSQQNE. Low complexity predominate over residues 3878–3912; it reads SPPAATSADTAPANPSPAPAAAVASTSQAASPTQI.

This sequence belongs to the peptidase C19 family. Interacts with Myc and ago.

The protein resides in the nucleus. It catalyses the reaction Thiol-dependent hydrolysis of ester, thioester, amide, peptide and isopeptide bonds formed by the C-terminal Gly of ubiquitin (a 76-residue protein attached to proteins as an intracellular targeting signal).. In terms of biological role, ubiquitin hydrolase that can remove conjugated ubiquitin from target proteins and polyubiquitin chains. Essential for Myc-mediated cell growth and proliferation in developing eyes and wings. In the wing and eye, the deubiquitinating activity acts as an antagonist to the SCF E3 ubiquitin-protein ligase member archipelago (ago) to regulate Myc and CycE stability and thus control cell growth and proliferation. Also appears to regulate ago by modulating its induction by Myc. May also promote cell apoptosis in the wing imaginal disk, acting in an apoptotic pathway that appears to be largely independent of Myc. Required for preventing the activation of the immune deficiency (Imd) and Toll signaling cascades under unchallenged conditions. Also appears to be involved in modulating the differential expression of certain antimicrobial peptides (AMP) in response to infection by either Gram-positive or Gram-negative bacteria. Involved in the regulation of DNA damage repair pathways, including euchromatic site-specific double strand break (DSB) repair. The protein is Ubiquitin carboxyl-terminal hydrolase puf of Drosophila melanogaster (Fruit fly).